The sequence spans 479 residues: Outer membrane protein OprJ (479 aa).

A signal peptide spans 1-19 (MRKPAFGVSALLIALTLGA). Cys-20 is lipidated: N-palmitoyl cysteine. Residue Cys-20 is the site of S-diacylglycerol cysteine attachment. The interval 102–121 (LNAAATGNRQRQPADLSAGN) is disordered.

The protein belongs to the outer membrane factor (OMF) (TC 1.B.17) family.

The protein localises to the cell outer membrane. In terms of biological role, channel-forming component of a multidrug resistance efflux pump. This chain is Outer membrane protein OprJ (oprJ), found in Pseudomonas aeruginosa (strain ATCC 15692 / DSM 22644 / CIP 104116 / JCM 14847 / LMG 12228 / 1C / PRS 101 / PAO1).